The primary structure comprises 876 residues: DNA polymerase 1 (876 aa).

The protein belongs to the DNA polymerase type-B family.

The catalysed reaction is DNA(n) + a 2'-deoxyribonucleoside 5'-triphosphate = DNA(n+1) + diphosphate. Functionally, this polymerase possesses two enzymatic activities: DNA synthesis (polymerase) and an exonucleolytic activity that degrades single-stranded DNA in the 3'- to 5'-direction. The sequence is that of DNA polymerase 1 (dpo1) from Sulfolobus acidocaldarius (strain ATCC 33909 / DSM 639 / JCM 8929 / NBRC 15157 / NCIMB 11770).